A 415-amino-acid chain; its full sequence is MGCMSSKLVPEGPSGNQAVVEVFNNERNKEYNRQNPHQNRGPRDPTKDPKNAGPPPEGQRSNRKVKKYRDKFDPRVTAKYDIKALIGRGNFSKVVRVEHRVTKQPYAIKMIDRVQGKEVFESEVAVLRRVKHSYIIQLIEVFETKDKVYMVMELATGGELFDRIIAKGSFTERDATRVLNMVLDGVKYLHGLGITHRDLKPENLLYYHPGHDSKIMITDFGLSSTRKGPENFMRTTCGTPEYIAPEIIARKPYMCQVDMWAVGVITYILLSGTMPFDDENKTRLYRLILKAKYSYAGEHWKDVSAQAKDFIDKLLVVSPGDRLSAADALKHQWLISNAASSSNKNLHRTISQNLIHRQSTRANSTKSAKSTRSTKSNKSNRSGRSLRSEHRRVMPDEIDELHRDPDVQADLASLG.

A disordered region spans residues 1-70 (MGCMSSKLVP…SNRKVKKYRD (70 aa)). Positions 41–50 (GPRDPTKDPK) are enriched in basic and acidic residues. In terms of domain architecture, Protein kinase spans 80 to 334 (YDIKALIGRG…AADALKHQWL (255 aa)). ATP is bound by residues 86–94 (IGRGNFSKV) and Lys109. Asp198 acts as the Proton acceptor in catalysis. Polar residues predominate over residues 353 to 362 (NLIHRQSTRA). The interval 353-415 (NLIHRQSTRA…DVQADLASLG (63 aa)) is disordered. Low complexity predominate over residues 363-385 (NSTKSAKSTRSTKSNKSNRSGRS). Basic and acidic residues predominate over residues 386 to 406 (LRSEHRRVMPDEIDELHRDPD).

This sequence belongs to the protein kinase superfamily. CAMK Ser/Thr protein kinase family.

The enzyme catalyses L-seryl-[protein] + ATP = O-phospho-L-seryl-[protein] + ADP + H(+). It catalyses the reaction L-threonyl-[protein] + ATP = O-phospho-L-threonyl-[protein] + ADP + H(+). The protein is Serine/threonine-protein kinase H1 homolog (PSKH1) of Pinctada fucata (Akoya pearl oyster).